Reading from the N-terminus, the 320-residue chain is Pyrroline-5-carboxylate reductase 2 (320 aa).

N-acetylserine is present on serine 2. Residues 6–11 and serine 34 contribute to the NADP(+) site; that span reads IGAGQL. Residues alanine 8, glutamine 10, leucine 11, serine 34, glutamate 36, asparagine 56, valine 70, lysine 71, and alanine 97 each coordinate NADPH. NADP(+) contacts are provided by residues asparagine 56, 69-72, and 95-97; these read AVKP and CAA. Glutamate 164 is an L-proline binding site. Residue asparagine 230 participates in NADPH binding. Alanine 237 and threonine 238 together coordinate L-proline. The interval 298 to 320 is disordered; the sequence is TTLTPTSSGKLLTRSPVPGGKKD. Phosphoserine is present on serine 304.

Belongs to the pyrroline-5-carboxylate reductase family. In terms of assembly, homodecamer; composed of 5 homodimers. Interacts with LTO1.

The protein localises to the cytoplasm. Its subcellular location is the mitochondrion. It catalyses the reaction L-proline + NADP(+) = (S)-1-pyrroline-5-carboxylate + NADPH + 2 H(+). The enzyme catalyses L-proline + NAD(+) = (S)-1-pyrroline-5-carboxylate + NADH + 2 H(+). Its pathway is amino-acid biosynthesis; L-proline biosynthesis; L-proline from L-glutamate 5-semialdehyde: step 1/1. Its function is as follows. Oxidoreductase that catalyzes the last step in proline biosynthesis, which corresponds to the reduction of pyrroline-5-carboxylate to L-proline using NAD(P)H. At physiologic concentrations, has higher specific activity in the presence of NADH. Involved in cellular response to oxidative stress. In some cell types, such as erythrocytes, its primary function may be the generation of NADP(+). The sequence is that of Pyrroline-5-carboxylate reductase 2 (PYCR2) from Bos taurus (Bovine).